The following is a 320-amino-acid chain: Phosphatidylserine decarboxylase proenzyme (320 aa).

Active-site charge relay system; for autoendoproteolytic cleavage activity residues include Asp-90, His-147, and Ser-254. The active-site Schiff-base intermediate with substrate; via pyruvic acid; for decarboxylase activity is Ser-254. Position 254 is a pyruvic acid (Ser); by autocatalysis (Ser-254). Positions Glu-288–Gly-320 are disordered.

This sequence belongs to the phosphatidylserine decarboxylase family. PSD-B subfamily. Prokaryotic type I sub-subfamily. In terms of assembly, heterodimer of a large membrane-associated beta subunit and a small pyruvoyl-containing alpha subunit. Pyruvate is required as a cofactor. Post-translationally, is synthesized initially as an inactive proenzyme. Formation of the active enzyme involves a self-maturation process in which the active site pyruvoyl group is generated from an internal serine residue via an autocatalytic post-translational modification. Two non-identical subunits are generated from the proenzyme in this reaction, and the pyruvate is formed at the N-terminus of the alpha chain, which is derived from the carboxyl end of the proenzyme. The autoendoproteolytic cleavage occurs by a canonical serine protease mechanism, in which the side chain hydroxyl group of the serine supplies its oxygen atom to form the C-terminus of the beta chain, while the remainder of the serine residue undergoes an oxidative deamination to produce ammonia and the pyruvoyl prosthetic group on the alpha chain. During this reaction, the Ser that is part of the protease active site of the proenzyme becomes the pyruvoyl prosthetic group, which constitutes an essential element of the active site of the mature decarboxylase.

Its subcellular location is the cell membrane. The enzyme catalyses a 1,2-diacyl-sn-glycero-3-phospho-L-serine + H(+) = a 1,2-diacyl-sn-glycero-3-phosphoethanolamine + CO2. It participates in phospholipid metabolism; phosphatidylethanolamine biosynthesis; phosphatidylethanolamine from CDP-diacylglycerol: step 2/2. Functionally, catalyzes the formation of phosphatidylethanolamine (PtdEtn) from phosphatidylserine (PtdSer). The polypeptide is Phosphatidylserine decarboxylase proenzyme (Klebsiella pneumoniae (strain 342)).